Here is a 503-residue protein sequence, read N- to C-terminus: Opine oxidase subunit A (503 aa).

It to T-protein and to dimethylglycine dehydrogenase. As to quaternary structure, heterodimer of a subunit A and a subunit B.

It participates in opine metabolism; octopine degradation. In terms of biological role, oxidative cleavage of octopine into L-arginine and pyruvate. The polypeptide is Opine oxidase subunit A (ooxA) (Agrobacterium tumefaciens (strain Ach5)).